The chain runs to 106 residues: ATP-dependent Clp protease adapter protein ClpS (106 aa).

Residues 1 to 13 (MPRNTSHEHDHGL) show a composition bias toward basic and acidic residues. Residues 1–20 (MPRNTSHEHDHGLMVEASKP) are disordered.

The protein belongs to the ClpS family. Binds to the N-terminal domain of the chaperone ClpA.

In terms of biological role, involved in the modulation of the specificity of the ClpAP-mediated ATP-dependent protein degradation. In Xanthomonas axonopodis pv. citri (strain 306), this protein is ATP-dependent Clp protease adapter protein ClpS.